A 1228-amino-acid polypeptide reads, in one-letter code: DNA-directed RNA polymerase subunit beta (1228 aa).

The tract at residues 1175-1204 (ESVDEDEQPQGLGAFEIGGDEIEEDKEDDK) is disordered. Acidic residues predominate over residues 1192–1202 (GGDEIEEDKED).

It belongs to the RNA polymerase beta chain family. In terms of assembly, the RNAP catalytic core consists of 2 alpha, 1 beta, 1 beta' and 1 omega subunit. When a sigma factor is associated with the core the holoenzyme is formed, which can initiate transcription.

The enzyme catalyses RNA(n) + a ribonucleoside 5'-triphosphate = RNA(n+1) + diphosphate. Its function is as follows. DNA-dependent RNA polymerase catalyzes the transcription of DNA into RNA using the four ribonucleoside triphosphates as substrates. This chain is DNA-directed RNA polymerase subunit beta, found in Caldicellulosiruptor bescii (strain ATCC BAA-1888 / DSM 6725 / KCTC 15123 / Z-1320) (Anaerocellum thermophilum).